The sequence spans 68 residues: Conotoxin Vc7.4 (68 aa).

The first 24 residues, 1–24 (MIRMGFFLTLTVAVLLTSLICTEA), serve as a signal peptide directing secretion. A propeptide spanning residues 25–45 (VPTDKRGMERLFDHVLLKDQR) is cleaved from the precursor. Disulfide bonds link C47/C55, C50/C60, and C54/C65.

This sequence belongs to the conotoxin U superfamily. Expressed by the venom duct.

The protein resides in the secreted. The polypeptide is Conotoxin Vc7.4 (Conus victoriae (Queen Victoria cone)).